The following is a 72-amino-acid chain: Translation initiation factor IF-1 (72 aa).

Residues 1 to 72 (MAKEDVIEVE…TRGRITYRFK (72 aa)) form the S1-like domain.

Belongs to the IF-1 family. Component of the 30S ribosomal translation pre-initiation complex which assembles on the 30S ribosome in the order IF-2 and IF-3, IF-1 and N-formylmethionyl-tRNA(fMet); mRNA recruitment can occur at any time during PIC assembly.

It is found in the cytoplasm. One of the essential components for the initiation of protein synthesis. Stabilizes the binding of IF-2 and IF-3 on the 30S subunit to which N-formylmethionyl-tRNA(fMet) subsequently binds. Helps modulate mRNA selection, yielding the 30S pre-initiation complex (PIC). Upon addition of the 50S ribosomal subunit IF-1, IF-2 and IF-3 are released leaving the mature 70S translation initiation complex. The chain is Translation initiation factor IF-1 from Listeria innocua serovar 6a (strain ATCC BAA-680 / CLIP 11262).